The primary structure comprises 20 residues: MELSLLLFLALLLGLLLLLF.

Belongs to the cytochrome P450 family. Heme is required as a cofactor.

Its subcellular location is the endoplasmic reticulum membrane. The protein localises to the microsome membrane. The enzyme catalyses an organic molecule + reduced [NADPH--hemoprotein reductase] + O2 = an alcohol + oxidized [NADPH--hemoprotein reductase] + H2O + H(+). In terms of biological role, cytochromes P450 are a group of heme-thiolate monooxygenases. In liver microsomes, this enzyme is involved in an NADPH-dependent electron transport pathway. This isozyme is active upon P.nitroanisole, aniline, D-benzphetamine, delta(9)-tetrahydrocannabinol (THC) and strychnine. This Cavia porcellus (Guinea pig) protein is Cytochrome P450IIB.